The primary structure comprises 66 residues: Stress-associated endoplasmic reticulum protein 1 (66 aa).

The segment at 1–33 (MVAKQRIRMANEKHSKNITQRGNVAKTSRNAPG) is disordered. Residues 1–38 (MVAKQRIRMANEKHSKNITQRGNVAKTSRNAPGEKASV) are Cytoplasmic-facing. The span at 17–30 (NITQRGNVAKTSRN) shows a compositional bias: polar residues. A helical membrane pass occupies residues 39–59 (GPWLLALFIFVVCGSAIFQII). The Extracellular portion of the chain corresponds to 60–66 (QSIRMGM).

Belongs to the RAMP4 family. In terms of assembly, interacts with SEC61B, SEC61A1 and the SEC61 complex. Interacts with CANX.

It localises to the membrane. The protein localises to the endoplasmic reticulum membrane. In terms of biological role, interacts with target proteins during their translocation into the lumen of the endoplasmic reticulum. Protects unfolded target proteins against degradation during ER stress. May facilitate glycosylation of target proteins after termination of ER stress. May modulate the use of N-glycosylation sites on target proteins. In Pongo abelii (Sumatran orangutan), this protein is Stress-associated endoplasmic reticulum protein 1 (SERP1).